Consider the following 452-residue polypeptide: GTPase Der (452 aa).

2 EngA-type G domains span residues 4-169 and 177-352; these read PVVA…PPQD and IQMA…EQHR. Residues 10-17, 57-61, 120-123, 183-190, 230-234, and 295-298 each bind GTP; these read GRPNVGKS, DTGGL, NKCE, DTAGI, and NKWD. The 86-residue stretch at 353–438 folds into the KH-like domain; it reads RRVTTAVVNE…PVRLFWRGKQ (86 aa).

Belongs to the TRAFAC class TrmE-Era-EngA-EngB-Septin-like GTPase superfamily. EngA (Der) GTPase family. As to quaternary structure, associates with the 50S ribosomal subunit.

In terms of biological role, GTPase that plays an essential role in the late steps of ribosome biogenesis. This is GTPase Der from Synechococcus sp. (strain RCC307).